We begin with the raw amino-acid sequence, 308 residues long: 1D-myo-inositol 2-acetamido-2-deoxy-alpha-D-glucopyranoside deacetylase (308 aa).

Zn(2+) is bound by residues His13, Asp16, and His147.

It belongs to the MshB deacetylase family. Requires Zn(2+) as cofactor.

It carries out the reaction 1D-myo-inositol 2-acetamido-2-deoxy-alpha-D-glucopyranoside + H2O = 1D-myo-inositol 2-amino-2-deoxy-alpha-D-glucopyranoside + acetate. Functionally, catalyzes the deacetylation of 1D-myo-inositol 2-acetamido-2-deoxy-alpha-D-glucopyranoside (GlcNAc-Ins) in the mycothiol biosynthesis pathway. The sequence is that of 1D-myo-inositol 2-acetamido-2-deoxy-alpha-D-glucopyranoside deacetylase from Mycobacterium leprae (strain Br4923).